The following is a 517-amino-acid chain: MAHQTQRRDTADTMTEVEVWDSRTAQEVNKSLYPPAVTNPFTHHTQLSAWQLACSIFLGTVLVPVRVSCIVFLFLLLWPVALLSTINLPIQPTEPVKSWRKHLIKPVFIFLLRLAFFCAGFLIKVKGKKATREEAPIFVVAPHSTFFDAIAVIVAGLPSVVSDTQHVRIPLVGQCILLTQPVLVRREDPNSRKTTRNEILSRVKSKMKWPQILIFPEGLCTNRSCLVTFKLGAFSPGVPVQPVLLRYPNTLDTVTWTWHGFSGFQVCMLTLSQPFTRMEVEFMPVYIPNEDEKKDPILFANTVRINMANALKLPVTDHSFEDCKLMISAGALRLPMEAGLVEFTKISQKLKLDWDNIHTHLDKYASVAVSSKGGKIGIEEFSRYLKLPISEPLRQLFSLFDRNQDGTIDFREYVIGLTVLCNPANTEKILQMSFKLFDLDEDGYITEQELTTMLRAAFGVPDLDVSTLFQQMAGKDSAQVSYRTFRRFALKHPAYAKLFHSYIDLQAAYIYSLPGEV.

Asparagine 29 carries an N-linked (GlcNAc...) asparagine glycan. Transmembrane regions (helical) follow at residues isoleucine 70–isoleucine 90, leucine 103–isoleucine 123, and isoleucine 137–leucine 157. The HXXXXD motif signature appears at histidine 143 to aspartate 148. EF-hand domains follow at residues proline 388–proline 423 and asparagine 425–valine 460. Aspartate 401, asparagine 403, aspartate 405, threonine 407, glutamate 412, aspartate 438, aspartate 440, aspartate 442, tyrosine 444, and glutamate 449 together coordinate Ca(2+).

It belongs to the 1-acyl-sn-glycerol-3-phosphate acyltransferase family.

It localises to the membrane. The protein operates within lipid metabolism; phospholipid metabolism. Its function is as follows. Probable acetyltransferase. The sequence is that of Lysophosphatidylcholine acyltransferase 2B (Lpcat2b) from Rattus norvegicus (Rat).